Reading from the N-terminus, the 1345-residue chain is MPCPAQISDDLEFFVNGRKVTEKNVDPEVTLLAFLRKNLCLTGTKDACGTGGCGACTVMVSQHDPVCKKTRHFSVMACLVPLCSLHGAAVTTVEGVGSIKTRLHPVQERIAKSHGTQCGFCTPGMVMSIYTLLRNHPQPSEEQLMEALGGNLCRCTGYRPILESGRTFCMEPDGCPQKGTGQCCLDQKESDSSGSKSDICTKLFVKDEFQPLDPTQELIFPPELLRMAENPEKQTLTFYGERITWIAPGTLQELLVLKAKYPEAPLISGNTALGPAMKSQGHFYPVLLSPARIPDLRMVTKTSGGLTIGACCSLAQVKDILAESISELPQEKTQTYRALLKHLRSLAGQQIRNMASLGGHVISRHCYSDLNPILSVGNTTLNLLSEEGPRQIPLSGHFLAGLASADLKPEEILGSVYIPHSQKREFVSAFRQAQCHQNALPDVNAGMRVLFREGTDVIEELSIAYGGVGPTTVSAQRSCQQLLGRRWNALMLDEACRLLLDEVSLPGSALGGKVEFRRTLIVSLFFKFYLEVLQELKADQKLPPESTDSQRYPEIADRFLSSLGDFQVTLPRGVQTYQRVDSHQPLQDPVGRPIMHLSGLKHATGEAVFCDDIPRVDKELFMALVTSTRAHARIISIDSSEVLDLPGVVDVITAEDIPGNNGEEDDKLLAVDKVLCVGQVICAVVAETDVQAKRATEKIKITYEDLKPVIFTIEDAIKHNSFLCPEKKLEQGNIEEAFENVDQVAEGTVHVGGQEHFYMETQRVLVIPKTEDKELDMYVSTQDPAHVQKTVSSTLNIPISRITCHVKRVGGGFGGKVGRPAVFGAIAAVGAVKTGHPIRLVLDREDDMLITGGRHPLFAKYKVGFMNSGRIKALDIECYINGGCTLDDSELVTEFLVLKLENAYKIRNLRLRGRACMTNLPSNTAFRGFGFPQGALVTESCITAVAAKCGLPPEKIREKNMYKTVDKTIYKQAFNPDPLIRCWNECLDKSSFHIRRTRVDEFNKKSYWKKRGIAIVPMKFSVGFAATSYHQAAALVHIYTDGSVLVAHGGNELGQGIHTKMLQVASRELKIPLSYLHICETSTTTVPNTIATAASVGADVNGRAVQNACQILLKRLEPVIKKNPEGTWRDWIEAAFEKRISLSATGYFRGYKAFMDWEKGEGDPFPYYVYGAACSEVEIDCLTGAHKKIRTDIVMDACCSLNPAIDIGQIEGAFIQGMGLYTTEELLYSPEGVLYSRSPDKYKIPTVTDVPEQFNVSLLPSSQTPLTLYSSKGLGESGMFLGSSVFFAIVDAVAAARRQRDIAEDFTVKSPATPEWVRMACADRFTDMIPRDDPKTFKPWSIPIA.

The 2Fe-2S ferredoxin-type domain maps to 9–96 (DDLEFFVNGR…GAAVTTVEGV (88 aa)). Cys-48, Cys-53, Cys-56, and Cys-78 together coordinate [2Fe-2S] cluster. Gln-117 is a binding site for Mo-molybdopterin. The [2Fe-2S] cluster site is built by Cys-118, Cys-121, Cys-153, and Cys-155. Cys-155 contributes to the Mo-molybdopterin binding site. The region spanning 238–423 (FYGERITWIA…GSVYIPHSQK (186 aa)) is the FAD-binding PCMH-type domain. FAD is bound by residues 266-273 (LISGNTAL), Ala-347, Ser-356, His-360, Asp-369, and Leu-413. Residues 812–813 (GF), 1094–1097 (ASVG), Gln-1209, and Leu-1274 each bind Mo-molybdopterin. Glu-1276 functions as the Proton acceptor; for azaheterocycle hydroxylase activity in the catalytic mechanism.

The protein belongs to the xanthine dehydrogenase family. Homodimer. It depends on [2Fe-2S] cluster as a cofactor. The cofactor is FAD. Mo-molybdopterin is required as a cofactor. In terms of tissue distribution, expressed in olfactory mucosa epithelium (at protein level). Detected in skin.

Its subcellular location is the cytoplasm. The catalysed reaction is an aldehyde + O2 + H2O = a carboxylate + H2O2 + H(+). Its function is as follows. Oxidase with broad substrate specificity, oxidizing aromatic azaheterocycles, such as phthalazine, as well as aldehydes, such as benzaldehyde and retinal. Cannot use hypoxanthine as substrate. The polypeptide is Aldehyde oxidase 2 (Aox2) (Mus musculus (Mouse)).